The sequence spans 153 residues: UPF0540 protein At1g62220 (153 aa).

The first 21 residues, 1–21 (MNATKFVVLLVISVLCAIVTA), serve as a signal peptide directing secretion. 2 disordered regions span residues 63–82 (SSATGFNNPKGPDANAYENG) and 122–153 (ARANGKVASASRVKGSSEKKKGKGKKGKGKKD). Over residues 122 to 132 (ARANGKVASAS) the composition is skewed to low complexity. The span at 141–153 (KKGKGKKGKGKKD) shows a compositional bias: basic residues.

It belongs to the UPF0540 family.

The sequence is that of UPF0540 protein At1g62220 from Arabidopsis thaliana (Mouse-ear cress).